The chain runs to 119 residues: Ribonuclease P protein component (119 aa).

It belongs to the RnpA family. In terms of assembly, consists of a catalytic RNA component (M1 or rnpB) and a protein subunit.

It carries out the reaction Endonucleolytic cleavage of RNA, removing 5'-extranucleotides from tRNA precursor.. Its function is as follows. RNaseP catalyzes the removal of the 5'-leader sequence from pre-tRNA to produce the mature 5'-terminus. It can also cleave other RNA substrates such as 4.5S RNA. The protein component plays an auxiliary but essential role in vivo by binding to the 5'-leader sequence and broadening the substrate specificity of the ribozyme. This is Ribonuclease P protein component from Beutenbergia cavernae (strain ATCC BAA-8 / DSM 12333 / CCUG 43141 / JCM 11478 / NBRC 16432 / NCIMB 13614 / HKI 0122).